The chain runs to 449 residues: Phosphoglucosamine mutase (449 aa).

Ser-102 acts as the Phosphoserine intermediate in catalysis. Positions 102, 241, 243, and 245 each coordinate Mg(2+). Ser-102 is subject to Phosphoserine.

The protein belongs to the phosphohexose mutase family. Mg(2+) is required as a cofactor. Activated by phosphorylation.

The catalysed reaction is alpha-D-glucosamine 1-phosphate = D-glucosamine 6-phosphate. Catalyzes the conversion of glucosamine-6-phosphate to glucosamine-1-phosphate. In Roseobacter denitrificans (strain ATCC 33942 / OCh 114) (Erythrobacter sp. (strain OCh 114)), this protein is Phosphoglucosamine mutase.